Here is a 325-residue protein sequence, read N- to C-terminus: Short chain isoprenyl diphosphate synthase (325 aa).

K44, R47, and H76 together coordinate isopentenyl diphosphate. Mg(2+) is bound by residues D83 and D87. R92 is a binding site for an all-trans-polyprenyl diphosphate. R93 is a binding site for isopentenyl diphosphate. K173, T174, Q211, K228, and K238 together coordinate an all-trans-polyprenyl diphosphate.

Belongs to the FPP/GGPP synthase family. Homodimer. Mg(2+) serves as cofactor.

Its subcellular location is the cytoplasm. In Methanothermobacter thermautotrophicus (strain ATCC 29096 / DSM 1053 / JCM 10044 / NBRC 100330 / Delta H) (Methanobacterium thermoautotrophicum), this protein is Short chain isoprenyl diphosphate synthase (idsA).